Here is a 116-residue protein sequence, read N- to C-terminus: Putative iron-sulfur cluster insertion protein ErpA (116 aa).

Residues C44, C108, and C110 each contribute to the iron-sulfur cluster site.

Belongs to the HesB/IscA family. As to quaternary structure, homodimer. The cofactor is iron-sulfur cluster.

Required for insertion of 4Fe-4S clusters. The chain is Putative iron-sulfur cluster insertion protein ErpA from Janthinobacterium sp. (strain Marseille) (Minibacterium massiliensis).